The following is a 258-amino-acid chain: MQTYLTLLETLLTTGVDKSDRTGVGTRSLFGYQMRFDLAAGFPLLTTKKMHFKSIVYELLWFLSGNTNIAYLNQNGVSIWDEWADKNGDLGPIYGKQWRNWAGRDQIHQVLTSLKTNPDSRRMLVSSWNVAQLEEMALPPCHVLFQFYVANGRLSCQLYQRSADVFLGVPFNIASYALLTMMMAQQADLELGDFVWTGGDVHLYRNHFAQAQEQLKRQPYPLPKMHIKRAKSIDDYVFEDFLLVDYRCHAAIKAPVAV.

DUMP is bound at residue Arg-21. His-51 lines the (6R)-5,10-methylene-5,6,7,8-tetrahydrofolate pocket. 121 to 122 (RR) is a binding site for dUMP. Cys-141 acts as the Nucleophile in catalysis. DUMP is bound by residues 161 to 164 (RSAD), Asn-172, and 202 to 204 (HLY). Asp-164 is a (6R)-5,10-methylene-5,6,7,8-tetrahydrofolate binding site. Ala-257 serves as a coordination point for (6R)-5,10-methylene-5,6,7,8-tetrahydrofolate.

It belongs to the thymidylate synthase family. Bacterial-type ThyA subfamily. As to quaternary structure, homodimer.

Its subcellular location is the cytoplasm. The enzyme catalyses dUMP + (6R)-5,10-methylene-5,6,7,8-tetrahydrofolate = 7,8-dihydrofolate + dTMP. It functions in the pathway pyrimidine metabolism; dTTP biosynthesis. In terms of biological role, catalyzes the reductive methylation of 2'-deoxyuridine-5'-monophosphate (dUMP) to 2'-deoxythymidine-5'-monophosphate (dTMP) while utilizing 5,10-methylenetetrahydrofolate (mTHF) as the methyl donor and reductant in the reaction, yielding dihydrofolate (DHF) as a by-product. This enzymatic reaction provides an intracellular de novo source of dTMP, an essential precursor for DNA biosynthesis. This is Thymidylate synthase from Dichelobacter nodosus (strain VCS1703A).